Consider the following 238-residue polypeptide: tRNA (guanine-N(1)-)-methyltransferase (238 aa).

S-adenosyl-L-methionine is bound by residues G108 and 127–132 (LGDFVL).

Belongs to the RNA methyltransferase TrmD family. As to quaternary structure, homodimer.

It localises to the cytoplasm. The enzyme catalyses guanosine(37) in tRNA + S-adenosyl-L-methionine = N(1)-methylguanosine(37) in tRNA + S-adenosyl-L-homocysteine + H(+). In terms of biological role, specifically methylates guanosine-37 in various tRNAs. This chain is tRNA (guanine-N(1)-)-methyltransferase, found in Streptococcus uberis (strain ATCC BAA-854 / 0140J).